The following is a 125-amino-acid chain: Large-conductance mechanosensitive channel (125 aa).

A run of 3 helical transmembrane segments spans residues 19-39 (VGVI…KYII), 42-62 (FLGL…IGNA), and 66-86 (VGSF…VFLM).

It belongs to the MscL family. As to quaternary structure, homopentamer.

The protein localises to the cell membrane. Channel that opens in response to stretch forces in the membrane lipid bilayer. May participate in the regulation of osmotic pressure changes within the cell. This chain is Large-conductance mechanosensitive channel, found in Ligilactobacillus salivarius (strain UCC118) (Lactobacillus salivarius).